The primary structure comprises 262 residues: Intron-encoded DNA endonuclease ai2b (262 aa).

This sequence belongs to the LAGLIDADG endonuclease family.

Its subcellular location is the mitochondrion. In terms of biological role, mitochondrial DNA endonuclease involved in intron homing. This Dictyostelium discoideum (Social amoeba) protein is Intron-encoded DNA endonuclease ai2b (ai2b).